The following is a 410-amino-acid chain: Class E basic helix-loop-helix protein 41 (410 aa).

Lysine 31 participates in a covalent cross-link: Glycyl lysine isopeptide (Lys-Gly) (interchain with G-Cter in SUMO2). The bHLH domain occupies threonine 44–leucine 99. Lysine 121 is covalently cross-linked (Glycyl lysine isopeptide (Lys-Gly) (interchain with G-Cter in SUMO2)). Residues phenylalanine 131–leucine 166 form the Orange domain. 2 disordered regions span residues isoleucine 209–proline 251 and glutamate 371–proline 410. Lysine 240 is covalently cross-linked (Glycyl lysine isopeptide (Lys-Gly) (interchain with G-Cter in SUMO2)).

Homodimer. Heterodimer with BHLHE40/DEC1. Interacts with CIART. Interacts with BMAL1 and RXRA. Interacts with NR0B2 and HNF1A. As to expression, highly expressed in the caudate putamen, pineal gland, granular cell layer of the cerebellum, olfactory bulb, piriform cortex, hippocampus and hypothalamic nuclei. Moderately expressed in skeletal muscle, heart. Weakly expressed in lung.

It is found in the nucleus. Transcriptional repressor involved in the regulation of the circadian rhythm by negatively regulating the activity of the clock genes and clock-controlled genes. Acts as the negative limb of a novel autoregulatory feedback loop (DEC loop) which differs from the one formed by the PER and CRY transcriptional repressors (PER/CRY loop). Both these loops are interlocked as it represses the expression of PER1 and in turn is repressed by PER1/2 and CRY1/2. Represses the activity of the circadian transcriptional activator: CLOCK-BMAL1 heterodimer by competing for the binding to E-box elements (5'-CACGTG-3') found within the promoters of its target genes. Negatively regulates its own expression and the expression of DBP and BHLHE41/DEC2. Acts as a corepressor of RXR and the RXR-LXR heterodimers and represses the ligand-induced RXRA/B/G, NR1H3/LXRA, NR1H4 and VDR transactivation activity. Inhibits HNF1A-mediated transactivation of CYP1A2, CYP2E1 and CYP3A11. The sequence is that of Class E basic helix-loop-helix protein 41 (Bhlhb3) from Rattus norvegicus (Rat).